The sequence spans 51 residues: Large ribosomal subunit protein bL33 (51 aa).

This sequence belongs to the bacterial ribosomal protein bL33 family.

This chain is Large ribosomal subunit protein bL33, found in Pseudoalteromonas translucida (strain TAC 125).